Reading from the N-terminus, the 108-residue chain is LBH domain-containing protein 2 (108 aa).

The segment covering Met-1–Pro-11 has biased composition (pro residues). The tract at residues Met-1–Gly-108 is disordered. In terms of domain architecture, LBH spans Gln-37–Glu-62. The span at Ser-63–Pro-85 shows a compositional bias: low complexity.

The polypeptide is LBH domain-containing protein 2 (Homo sapiens (Human)).